Consider the following 411-residue polypeptide: Na(+)-translocating NADH-quinone reductase subunit F (411 aa).

The chain crosses the membrane as a helical span at residues 5-25; sequence VILALGIAAFTVIVLVLVAII. The 2Fe-2S ferredoxin-type domain occupies 36–130; sequence GDITIDINDD…NMEVELPEEI (95 aa). 4 residues coordinate [2Fe-2S] cluster: Cys-73, Cys-79, Cys-82, and Cys-114. Residues 133-273 form the FAD-binding FR-type domain; that stretch reads VKKWECTVIS…SGPFGEFFAK (141 aa). A catalytic region spans residues 276–393; sequence DAEMVFIGGG…PVMNAAVIKM (118 aa).

It belongs to the NqrF family. In terms of assembly, composed of six subunits; NqrA, NqrB, NqrC, NqrD, NqrE and NqrF. The cofactor is [2Fe-2S] cluster. It depends on FAD as a cofactor.

It localises to the cell inner membrane. The catalysed reaction is a ubiquinone + n Na(+)(in) + NADH + H(+) = a ubiquinol + n Na(+)(out) + NAD(+). Its function is as follows. NQR complex catalyzes the reduction of ubiquinone-1 to ubiquinol by two successive reactions, coupled with the transport of Na(+) ions from the cytoplasm to the periplasm. The first step is catalyzed by NqrF, which accepts electrons from NADH and reduces ubiquinone-1 to ubisemiquinone by a one-electron transfer pathway. The sequence is that of Na(+)-translocating NADH-quinone reductase subunit F from Haemophilus influenzae (strain ATCC 51907 / DSM 11121 / KW20 / Rd).